We begin with the raw amino-acid sequence, 438 residues long: Diaminopimelate decarboxylase (438 aa).

Lys73 carries the post-translational modification N6-(pyridoxal phosphate)lysine. Pyridoxal 5'-phosphate-binding positions include Ser217, Gly254, and 294-297; that span reads EPGR. Positions 297, 333, and 337 each coordinate substrate. Catalysis depends on Cys362, which acts as the Proton donor. The substrate site is built by Glu363 and Tyr391. Residue Tyr391 coordinates pyridoxal 5'-phosphate.

Belongs to the Orn/Lys/Arg decarboxylase class-II family. LysA subfamily. As to quaternary structure, homodimer. Requires pyridoxal 5'-phosphate as cofactor.

The enzyme catalyses meso-2,6-diaminopimelate + H(+) = L-lysine + CO2. Its pathway is amino-acid biosynthesis; L-lysine biosynthesis via DAP pathway; L-lysine from DL-2,6-diaminopimelate: step 1/1. Competitively inhibited by the substrate analog azelaic acid in vitro but not in vivo. Functionally, specifically catalyzes the decarboxylation of meso-diaminopimelate (meso-DAP) to L-lysine. This chain is Diaminopimelate decarboxylase, found in Methanocaldococcus jannaschii (strain ATCC 43067 / DSM 2661 / JAL-1 / JCM 10045 / NBRC 100440) (Methanococcus jannaschii).